Reading from the N-terminus, the 360-residue chain is MEELSQALASSFSVSQDLNSTAAPHPRLSQYKSKYSSLEQSERRRRLLELQKSKRLDYVNHARRLAEDDWTGMESEEENKKDDEEMDIDTVKKLPKHYANQLMLSEWLIDVPSDLGQEWIVVVCPVGKRALIVASRGSTSAYTKSGYCVNRFSSLLPGGNRRNSTAKDYTILDCIYNEVNQTYYVLDVMCWRGHPFYDCQTDFRFYWMHSKLPEEEGLGEKTKLNPFKFVGLKNFPCTPESLCDVLSMDFPFEVDGLLFYHKQTHYSPGSTPLVGWLRPYMVSDVLGVAVPAGPLTTKPDYAGHQLQQIMEHKKSQKEGMKEKLTHKASENGHYELEHLSTPKLKGSSHSPDHPGCLMEN.

Met1 is subject to N-acetylmethionine. Positions 1–42 (MEELSQALASSFSVSQDLNSTAAPHPRLSQYKSKYSSLEQSE) are disordered. Residues 1-65 (MEELSQALAS…LDYVNHARRL (65 aa)) form a necessary for interaction with KPNB1 and m3G-cap U1 and U5 snRNP import receptor activity region. Positions 1-159 (MEELSQALAS…NRFSSLLPGG (159 aa)) are necessary for interaction with XPO1. Residues 7–22 (ALASSFSVSQDLNSTA) are compositionally biased toward polar residues. In terms of domain architecture, IBB spans 11-73 (SFSVSQDLNS…RLAEDDWTGM (63 aa)). A Phosphoserine modification is found at Ser75. Residues 127–129 (GKR) are interaction with m3G-cap structure. Residues 208 to 328 (MHSKLPEEEG…GMKEKLTHKA (121 aa)) are necessary for binding to the m3G-cap structure. Residues 339-360 (LSTPKLKGSSHSPDHPGCLMEN) are disordered. Position 350 is a phosphoserine (Ser350).

Belongs to the snurportin family. As to quaternary structure, component of an import snRNP complex composed of KPNB1, SNUPN, SMN1 and ZNF259. Component of a nuclear export receptor complex composed of KPNB1, Ran, SNUPN and XPO1. Found in a trimeric export complex with SNUPN, Ran and XPO1. Interacts (via IBB domain) with KPNB1; the interaction is direct. Interacts with DDX20, IPO7, SMN1, SNRPB and XPO1. Interacts directly with XPO1. Its interaction with XPO1 and binding to m3G-cap U snRNPs appears to be mutually exclusive. Can form homomers.

Its subcellular location is the nucleus. The protein localises to the cytoplasm. Functionally, functions as an U snRNP-specific nuclear import adapter. Involved in the trimethylguanosine (m3G)-cap-dependent nuclear import of U snRNPs. Binds specifically to the terminal m3G-cap U snRNAs. The polypeptide is Snurportin-1 (SNUPN) (Homo sapiens (Human)).